Here is a 168-residue protein sequence, read N- to C-terminus: Endoribonuclease YbeY (168 aa).

The Zn(2+) site is built by H128, H132, and H138.

Belongs to the endoribonuclease YbeY family. Requires Zn(2+) as cofactor.

The protein localises to the cytoplasm. In terms of biological role, single strand-specific metallo-endoribonuclease involved in late-stage 70S ribosome quality control and in maturation of the 3' terminus of the 16S rRNA. This chain is Endoribonuclease YbeY, found in Sphingopyxis alaskensis (strain DSM 13593 / LMG 18877 / RB2256) (Sphingomonas alaskensis).